Consider the following 425-residue polypeptide: GTPase Obg (425 aa).

One can recognise an Obg domain in the interval 1 to 158 (MFKDYAKIHV…LWLELELKLL (158 aa)). An OBG-type G domain is found at 159–329 (ADVGLVGFPN…LIYRTYRLLE (171 aa)). GTP contacts are provided by residues 165–172 (GFPNAGKS), 190–194 (FTTLE), 212–215 (DIPG), 282–285 (NKTD), and 310–312 (SAL). Residues Ser172 and Thr192 each contribute to the Mg(2+) site. Positions 341-421 (VPDERETDVT…IGRFEFEYSE (81 aa)) constitute an OCT domain.

This sequence belongs to the TRAFAC class OBG-HflX-like GTPase superfamily. OBG GTPase family. As to quaternary structure, monomer. Mg(2+) serves as cofactor.

Its subcellular location is the cytoplasm. In terms of biological role, an essential GTPase which binds GTP, GDP and possibly (p)ppGpp with moderate affinity, with high nucleotide exchange rates and a fairly low GTP hydrolysis rate. Plays a role in control of the cell cycle, stress response, ribosome biogenesis and in those bacteria that undergo differentiation, in morphogenesis control. The protein is GTPase Obg of Desulforudis audaxviator (strain MP104C).